A 65-amino-acid chain; its full sequence is Conotoxin TsMRCL-04 (65 aa).

The N-terminal stretch at 1–20 is a signal peptide; sequence MRCLPVFIILLLLIPSAASA. A propeptide spanning residues 21–48 is cleaved from the precursor; that stretch reads AQPETKDDAALASFYDNAKRTLQRHWAK. E63 is subject to Glutamic acid 1-amide.

The protein belongs to the conotoxin T superfamily. Post-translationally, contains 2 disulfide bonds that can be either 'C1-C3, C2-C4' or 'C1-C4, C2-C3', since these disulfide connectivities have been observed for conotoxins with cysteine framework V (for examples, see AC P0DQQ7 and AC P81755). Expressed by the venom duct.

The protein resides in the secreted. This chain is Conotoxin TsMRCL-04, found in Conus tessulatus (Tessellate cone).